The sequence spans 288 residues: 4-diphosphocytidyl-2-C-methyl-D-erythritol kinase (288 aa).

Lys8 is a catalytic residue. 90 to 100 (PVGAGLAGGSS) lines the ATP pocket. Asp132 is a catalytic residue.

This sequence belongs to the GHMP kinase family. IspE subfamily.

It catalyses the reaction 4-CDP-2-C-methyl-D-erythritol + ATP = 4-CDP-2-C-methyl-D-erythritol 2-phosphate + ADP + H(+). It functions in the pathway isoprenoid biosynthesis; isopentenyl diphosphate biosynthesis via DXP pathway; isopentenyl diphosphate from 1-deoxy-D-xylulose 5-phosphate: step 3/6. Catalyzes the phosphorylation of the position 2 hydroxy group of 4-diphosphocytidyl-2C-methyl-D-erythritol. The chain is 4-diphosphocytidyl-2-C-methyl-D-erythritol kinase from Chlamydia trachomatis serovar L2b (strain UCH-1/proctitis).